Reading from the N-terminus, the 240-residue chain is Peptidyl-tRNA hydrolase (240 aa).

Tyr14 contacts tRNA. The active-site Proton acceptor is His19. 3 residues coordinate tRNA: Tyr64, Asn66, and Asn112. Basic and acidic residues predominate over residues 190–204 (KADEEKPRKDSEKKP). The segment at 190-240 (KADEEKPRKDSEKKPAGQSHIRQARNNNQPKLPATGPMADMLKKMFGNKGE) is disordered. The span at 209-219 (HIRQARNNNQP) shows a compositional bias: polar residues.

Belongs to the PTH family. As to quaternary structure, monomer.

It localises to the cytoplasm. It carries out the reaction an N-acyl-L-alpha-aminoacyl-tRNA + H2O = an N-acyl-L-amino acid + a tRNA + H(+). Functionally, hydrolyzes ribosome-free peptidyl-tRNAs (with 1 or more amino acids incorporated), which drop off the ribosome during protein synthesis, or as a result of ribosome stalling. Its function is as follows. Catalyzes the release of premature peptidyl moieties from peptidyl-tRNA molecules trapped in stalled 50S ribosomal subunits, and thus maintains levels of free tRNAs and 50S ribosomes. The polypeptide is Peptidyl-tRNA hydrolase (Rhizobium etli (strain ATCC 51251 / DSM 11541 / JCM 21823 / NBRC 15573 / CFN 42)).